Consider the following 1288-residue polypeptide: SH3 domain and tetratricopeptide repeat-containing protein 2 (1288 aa).

SH3 domains lie at 176 to 240 (EGHF…PLPL) and 268 to 331 (IGRG…PDSY). Residues 386-395 (NPPNDLSASQ) show a composition bias toward polar residues. Disordered regions lie at residues 386 to 405 (NPPNDLSASQPEGFKEVRPG) and 410 to 444 (EHQAVGSRQSSSSEDSSLEEELLSATSDSYRLPEP). TPR repeat units lie at residues 528–561 (ARLCFLLGRLSIRKVKLSQARVYFEEAIHILNGA), 757–790 (RALCLILSKVYLEHRSPDGAIHYLSQALVLGQLL), 836–869 (GVIYNLLGLALQGEGRVNRAAKSYLRALNRAQEV), 1001–1037 (GRLLESLGQLYRNLNTARSLRRSLTCIKESLRIFIDL), 1084–1118 (LKLYEEAGDVFFNGTRHRHHAVEYYRAGAVPLARR), 1119–1152 (LKAVRTELRIFNKLTELQISLEGYEKALEFATLA), 1166–1199 (LVAFHRLATVYYSLHMYEMAEDCYLKTLSLCPPW), and 1210–1244 (AKVYYRLGRLTFCQLKDAHDATEYFLLALAAAVLL).

As to expression, strongly expressed in brain and spinal cord. Expressed at equal level in spinal cord and sciatic nerve. Weakly expressed in striated muscle.

The sequence is that of SH3 domain and tetratricopeptide repeat-containing protein 2 (SH3TC2) from Homo sapiens (Human).